Reading from the N-terminus, the 465-residue chain is GTPase Der (465 aa).

EngA-type G domains follow at residues 27–190 and 202–375; these read PVLA…PEAP and RRIA…AGWE. GTP-binding positions include 33-40, 80-84, 142-145, 208-215, 255-259, and 320-323; these read GRPNVGKS, DTGGW, NKVD, DTAGI, and NKWD. Residues 376 to 458 enclose the KH-like domain; sequence TRVPTGRLNA…PIHISVRVRE (83 aa).

The protein belongs to the TRAFAC class TrmE-Era-EngA-EngB-Septin-like GTPase superfamily. EngA (Der) GTPase family. As to quaternary structure, associates with the 50S ribosomal subunit.

GTPase that plays an essential role in the late steps of ribosome biogenesis. This Streptomyces coelicolor (strain ATCC BAA-471 / A3(2) / M145) protein is GTPase Der.